Consider the following 207-residue polypeptide: MPKVSLFNQTGSQVGEIELADNVFGVEPNESVLHDAVVMQQASLRQGTHKTKGRSEVRGGGRKPWRQKGTGRARQGSIRSPQWVGGGVVFGPTPRSYSYKLPKKVRRLAIKSALSSKVKDSELVVLDDLKLEAIKTKAMKDVLASLSVDSKALVVTADYNENVALSARNLPGITFLTADGVNVLDLLKHDKLVITKDAVEKVEEVLA.

The disordered stretch occupies residues 44–77 (LRQGTHKTKGRSEVRGGGRKPWRQKGTGRARQGS). The span at 60–71 (GGRKPWRQKGTG) shows a compositional bias: basic residues.

This sequence belongs to the universal ribosomal protein uL4 family. Part of the 50S ribosomal subunit.

One of the primary rRNA binding proteins, this protein initially binds near the 5'-end of the 23S rRNA. It is important during the early stages of 50S assembly. It makes multiple contacts with different domains of the 23S rRNA in the assembled 50S subunit and ribosome. In terms of biological role, forms part of the polypeptide exit tunnel. The chain is Large ribosomal subunit protein uL4 from Shouchella clausii (strain KSM-K16) (Alkalihalobacillus clausii).